We begin with the raw amino-acid sequence, 30 residues long: Dendrotoxin B (30 aa).

Residues C3 and C22 are joined by a disulfide bond.

Belongs to the three-finger toxin family. Short-chain subfamily. Orphan group XI sub-subfamily. Contains 4 disulfide bonds. As to expression, expressed by the venom gland.

It localises to the secreted. Its function is as follows. Blocks voltage-gated potassium channels (Kv). This is the slowly inactivating phase of potassium efflux which is blocked by this toxin. This Dendroaspis angusticeps (Eastern green mamba) protein is Dendrotoxin B.